Reading from the N-terminus, the 127-residue chain is UPF0212 protein VNG_1264C (127 aa).

It belongs to the UPF0212 family.

This chain is UPF0212 protein VNG_1264C, found in Halobacterium salinarum (strain ATCC 700922 / JCM 11081 / NRC-1) (Halobacterium halobium).